Here is a 1213-residue protein sequence, read N- to C-terminus: Hybrid signal transduction histidine kinase K (1213 aa).

Disordered regions lie at residues 1–37 (MIELNNHSKINKNENNTNTRNNSSNNNNNNNNINKTN), 98–189 (NNNY…SSSS), 279–392 (NKNV…IPFR), and 495–565 (TTEQ…NYNN). Composition is skewed to low complexity over residues 98–162 (NNNY…QKDQ), 171–189 (SLSSSSSSSSLSSSSSSSS), 279–331 (NKNV…NSGA), 339–371 (NNNNNNNNNNNNNNNNNNNSNSNSNNNSKSNNN), 498–511 (QQQQLQQQQQQQQQ), and 522–565 (QRQQ…NYNN). A run of 6 helical transmembrane segments spans residues 600-618 (IIFNSFNFICSIVLDGSNI), 628-648 (LIIGFCFTILSFIPSWIIFFW), 652-672 (INKPAVMAIIAMPMSISSLVI), 676-696 (TGSIHYPCHILCFTLCFALTI), 729-749 (IQWSLMVLSIYLLFFVANLYG), and 768-788 (IIDVTIIIMTLIFTLCYQYFI). One can recognise a Histidine kinase domain in the interval 822–1052 (TMSHEIRTPL…TFWFILPLEE (231 aa)). A Phosphohistidine; by autocatalysis modification is found at His825. The Response regulatory domain occupies 1076–1199 (KVLIAEDNII…QLRSAIEMAI (124 aa)). The residue at position 1125 (Asp1125) is a 4-aspartylphosphate.

Activation probably requires transfer of a phosphate group between a histidine in the kinase core (transmitter) domain and an aspartate of the receiver domain.

Its subcellular location is the nucleus membrane. The enzyme catalyses ATP + protein L-histidine = ADP + protein N-phospho-L-histidine.. In terms of biological role, involved in a signal transduction pathway that regulates morphogenesis and controls entry into the culmination stage. May act via the regA pathway, being activated by a morphogenesis-stimulated ligand, reducing phosphodiesterase regA levels and allowing cAMP level to rise to promote the culmination stage. This protein probably undergoes an ATP-dependent autophosphorylation at a conserved histidine residue in the kinase core, and a phosphoryl group is then transferred to a conserved aspartate residue in the receiver domain. This chain is Hybrid signal transduction histidine kinase K (dhkK), found in Dictyostelium discoideum (Social amoeba).